Consider the following 629-residue polypeptide: MADINSPLEIGVTTGPIRGSKKIYVGARTGSGVRVAMREIQLEGGEEPVRVYDTSGPYTDPEVSIDIQAGLPALRREWIMGRGDVEEYAARAVKPEDNGQLGPDRSGGVPAFPNVARTVLRAKPGQNVSQMHYARKGIITPEMEYVAERENVGRAKLETAPDGQAWGAEIPQEITPEFVRDEVARGRAIIPNNINHPETEPMAIGRNFLVKINANIGNSAVASDVAAEVDKMVWSIRWGADTVMDLSTGRNIHDTREWIIRNSPVPIGTVPIYQALEKVGGIAEDLTWDIFRDTLIEQAEQGVDYFTIHAGVRLPYVPMTAKRVTGIVSRGGSIMAKWCLAHHKESFLYERFDEITEIMKAYDIAYSLGDGLRPGSIADANDEAQFAELYTLGELTKRAWEQDVQVMIEGPGHVPMHKIKENMDKQLEACGEAPFYTLGPLVTDIAPGYDHITSGIGAAQIGWYGTAMLCYVTPKEHLGLPDRDDVKVGVVTYKLAAHAADLAKGHPAAKVRDDALSKARFEFRWRDQFNLSLDPDTAEQYHDQTLPAEGAKTAHFCSMCGPKFCSMKITQEVRDFAAKQNSDSYLASENIKRETSAEEAEEAREGMSDMAELYKAKGERLYLPESEAD.

Substrate-binding positions include asparagine 215, methionine 244, tyrosine 273, histidine 309, 329–331, 370–373, and glutamate 409; these read SRG and DGLR. Histidine 413 lines the Zn(2+) pocket. Substrate is bound at residue tyrosine 436. Histidine 477 lines the Zn(2+) pocket. The [4Fe-4S] cluster site is built by cysteine 557, cysteine 560, and cysteine 565. The disordered stretch occupies residues 589–610; that stretch reads ENIKRETSAEEAEEAREGMSDM.

The protein belongs to the ThiC family. In terms of assembly, homodimer. Requires [4Fe-4S] cluster as cofactor.

The enzyme catalyses 5-amino-1-(5-phospho-beta-D-ribosyl)imidazole + S-adenosyl-L-methionine = 4-amino-2-methyl-5-(phosphooxymethyl)pyrimidine + CO + 5'-deoxyadenosine + formate + L-methionine + 3 H(+). It functions in the pathway cofactor biosynthesis; thiamine diphosphate biosynthesis. Functionally, catalyzes the synthesis of the hydroxymethylpyrimidine phosphate (HMP-P) moiety of thiamine from aminoimidazole ribotide (AIR) in a radical S-adenosyl-L-methionine (SAM)-dependent reaction. The protein is Phosphomethylpyrimidine synthase of Erythrobacter litoralis (strain HTCC2594).